A 236-amino-acid chain; its full sequence is Ubiquinone biosynthesis O-methyltransferase (236 aa).

Residues Arg-39, Gly-59, Asp-80, and Met-124 each contribute to the S-adenosyl-L-methionine site.

The protein belongs to the methyltransferase superfamily. UbiG/COQ3 family.

It catalyses the reaction a 3-demethylubiquinol + S-adenosyl-L-methionine = a ubiquinol + S-adenosyl-L-homocysteine + H(+). The catalysed reaction is a 3-(all-trans-polyprenyl)benzene-1,2-diol + S-adenosyl-L-methionine = a 2-methoxy-6-(all-trans-polyprenyl)phenol + S-adenosyl-L-homocysteine + H(+). It participates in cofactor biosynthesis; ubiquinone biosynthesis. Functionally, O-methyltransferase that catalyzes the 2 O-methylation steps in the ubiquinone biosynthetic pathway. In Shewanella sp. (strain W3-18-1), this protein is Ubiquinone biosynthesis O-methyltransferase.